Reading from the N-terminus, the 396-residue chain is E3 ubiquitin-protein transferase MAEA (396 aa).

The 33-residue stretch at Lys-121 to Asp-153 folds into the LisH domain. A CTLH domain is found at Met-159 to Asp-216. The RING-Gid-type zinc finger occupies Cys-314–Thr-381.

As to quaternary structure, identified in the CTLH complex that contains at least MAEA, RMND5A, GID8, WDR26, and RANBP9 and/or RANBP10 as the catalytic core. Interacts with F-actin.

It is found in the nucleus matrix. It localises to the cell membrane. The protein resides in the cytoplasm. The protein localises to the cytoskeleton. The enzyme catalyses S-ubiquitinyl-[E2 ubiquitin-conjugating enzyme]-L-cysteine + [acceptor protein]-L-lysine = [E2 ubiquitin-conjugating enzyme]-L-cysteine + N(6)-ubiquitinyl-[acceptor protein]-L-lysine.. In terms of biological role, core component of the CTLH E3 ubiquitin-protein ligase complex that selectively accepts ubiquitin from UBE2H and mediates ubiquitination and subsequent proteasomal degradation of the transcription factor HBP1. MAEA and RMND5A are both required for catalytic activity of the CTLH E3 ubiquitin-protein ligase complex. MAEA is required for normal cell proliferation. The CTLH E3 ubiquitin-protein ligase complex is not required for the degradation of enzymes involved in gluconeogenesis, such as FBP1. Plays a role in erythroblast maturation and in the development of mature macrophages. Mediates the attachment of erythroid cell to mature macrophages; this MAEA-mediated contact inhibits erythroid cell apoptosis. Participates in erythroblastic island formation, which is the functional unit of definitive erythropoiesis. Associates with F-actin to regulate actin distribution in erythroblasts and macrophages. May contribute to nuclear architecture and cells division events. The protein is E3 ubiquitin-protein transferase MAEA (maea) of Danio rerio (Zebrafish).